Here is a 441-residue protein sequence, read N- to C-terminus: Mitochondrial distribution and morphology protein 12 (441 aa).

An SMP-LTD domain is found at 1–441 (MSIDIDWERA…VYPSFWTFLV (441 aa)). 2 disordered regions span residues 70-89 (YEDG…PMRE) and 180-289 (TPLR…RMRE). Polar residues-rich tracts occupy residues 226 to 245 (SRPS…SVST) and 253 to 263 (SSQTVLANNPG).

It belongs to the MDM12 family. In terms of assembly, component of the ER-mitochondria encounter structure (ERMES) or MDM complex, composed of MMM1, MDM10, MDM12 and MDM34. An MMM1 homodimer associates with one molecule of MDM12 on each side in a pairwise head-to-tail manner, and the SMP-LTD domains of MMM1 and MDM12 generate a continuous hydrophobic tunnel for phospholipid trafficking.

The protein localises to the mitochondrion outer membrane. The protein resides in the endoplasmic reticulum membrane. Its function is as follows. Component of the ERMES/MDM complex, which serves as a molecular tether to connect the endoplasmic reticulum (ER) and mitochondria. Components of this complex are involved in the control of mitochondrial shape and protein biogenesis, and function in nonvesicular lipid trafficking between the ER and mitochondria. MDM12 is required for the interaction of the ER-resident membrane protein MMM1 and the outer mitochondrial membrane-resident beta-barrel protein MDM10. The MDM12-MMM1 subcomplex functions in the major beta-barrel assembly pathway that is responsible for biogenesis of all mitochondrial outer membrane beta-barrel proteins, and acts in a late step after the SAM complex. The MDM10-MDM12-MMM1 subcomplex further acts in the TOM40-specific pathway after the action of the MDM12-MMM1 complex. Essential for establishing and maintaining the structure of mitochondria and maintenance of mtDNA nucleoids. This is Mitochondrial distribution and morphology protein 12 from Paracoccidioides brasiliensis (strain Pb03).